The following is a 278-amino-acid chain: Small ribosomal subunit biogenesis GTPase RsgA (278 aa).

Residues Lys-62–Ile-218 form the CP-type G domain. GTP is bound by residues Thr-112 to Asp-115 and Gly-162 to Ser-170. Zn(2+)-binding residues include Cys-241, Cys-246, His-248, and Cys-254.

It belongs to the TRAFAC class YlqF/YawG GTPase family. RsgA subfamily. In terms of assembly, monomer. Associates with 30S ribosomal subunit, binds 16S rRNA. It depends on Zn(2+) as a cofactor.

The protein resides in the cytoplasm. Its function is as follows. One of several proteins that assist in the late maturation steps of the functional core of the 30S ribosomal subunit. Helps release RbfA from mature subunits. May play a role in the assembly of ribosomal proteins into the subunit. Circularly permuted GTPase that catalyzes slow GTP hydrolysis, GTPase activity is stimulated by the 30S ribosomal subunit. In Mycoplasma pneumoniae (strain ATCC 29342 / M129 / Subtype 1) (Mycoplasmoides pneumoniae), this protein is Small ribosomal subunit biogenesis GTPase RsgA.